The chain runs to 592 residues: Imidazole glycerol phosphate synthase hisHF, chloroplastic (592 aa).

The N-terminal 55 residues, 1 to 55 (MEATAAPFSSIVSSRQNFSSSSSIRASSPASLFLSQKSIGNVNRKFKSPRSLSVR), are a transit peptide targeting the chloroplast. A Glutamine amidotransferase type-1 domain is found at 63-271 (VVTLLDYGAG…LHPKLPATQK (209 aa)). Catalysis depends on for GATase activity residues Cys-141, His-246, and Glu-248. Residues 280 to 592 (LAKRVIACLD…LQEERIEVRI (313 aa)) form a cyclase region. Active-site residues include Asp-289 and Asp-447.

It in the C-terminal section; belongs to the HisA/HisF family.

The protein resides in the plastid. The protein localises to the chloroplast. The enzyme catalyses 5-[(5-phospho-1-deoxy-D-ribulos-1-ylimino)methylamino]-1-(5-phospho-beta-D-ribosyl)imidazole-4-carboxamide + L-glutamine = D-erythro-1-(imidazol-4-yl)glycerol 3-phosphate + 5-amino-1-(5-phospho-beta-D-ribosyl)imidazole-4-carboxamide + L-glutamate + H(+). It catalyses the reaction L-glutamine + H2O = L-glutamate + NH4(+). It participates in amino-acid biosynthesis; L-histidine biosynthesis; L-histidine from 5-phospho-alpha-D-ribose 1-diphosphate: step 5/9. Its function is as follows. IGPS catalyzes the conversion of PRFAR and glutamine to IGP, AICAR and glutamate. The glutaminase domain produces the ammonia necessary for the cyclase domain to produce IGP and AICAR from PRFAR. The ammonia is channeled to the active site of the cyclase domain. The protein is Imidazole glycerol phosphate synthase hisHF, chloroplastic (HISN4) of Arabidopsis thaliana (Mouse-ear cress).